The chain runs to 777 residues: Serine/threonine-protein kinase PTK2 (777 aa).

The tract at residues Asn-21–Asn-174 is disordered. Residues Thr-30–Lys-41 show a composition bias toward low complexity. 2 stretches are compositionally biased toward polar residues: residues Ala-50–Pro-61 and Arg-83–Met-133. The segment covering Ser-149–Ser-172 has biased composition (low complexity). Residues Asp-222–Phe-529 form the Protein kinase domain. ATP-binding positions include Ile-228 to Val-236 and Lys-252. The active-site Proton acceptor is the Asp-355. 2 disordered regions span residues Asp-564 to Glu-705 and Ser-728 to Val-764. Composition is skewed to polar residues over residues Thr-575–His-592 and Thr-648–Phe-672. A compositionally biased stretch (low complexity) spans Asn-677–Asp-694. Polar residues predominate over residues Asn-744–Thr-756.

The protein belongs to the protein kinase superfamily. Ser/Thr protein kinase family.

The catalysed reaction is L-seryl-[protein] + ATP = O-phospho-L-seryl-[protein] + ADP + H(+). It carries out the reaction L-threonyl-[protein] + ATP = O-phospho-L-threonyl-[protein] + ADP + H(+). The protein is Serine/threonine-protein kinase PTK2 (PTK2) of Candida glabrata (strain ATCC 2001 / BCRC 20586 / JCM 3761 / NBRC 0622 / NRRL Y-65 / CBS 138) (Yeast).